We begin with the raw amino-acid sequence, 516 residues long: Katanin p60 ATPase-containing subunit A1 (516 aa).

Residues 75–212 (GFKSEPAAPE…DEKKFDPAGY (138 aa)) form a disordered region. Composition is skewed to basic and acidic residues over residues 133–143 (ARKDPPRRSEP) and 155–167 (RGGR…RGDA). A compositionally biased stretch (gly residues) spans 168 to 178 (RSGGGGRGGAR). Over residues 179–212 (GSDKDKNRGGKSDKDKKAPSGEEGDEKKFDPAGY) the composition is skewed to basic and acidic residues. Residue 274–281 (GPPGTGKT) coordinates ATP.

This sequence belongs to the AAA ATPase family. Katanin p60 subunit A1 subfamily. Can homooligomerize into hexameric rings, which may be promoted by interaction with microtubules. Interacts with KATNB1, which may serve as a targeting subunit.

It is found in the cytoplasm. It localises to the cytoskeleton. The protein localises to the microtubule organizing center. The protein resides in the centrosome. Its subcellular location is the spindle pole. The catalysed reaction is n ATP + n H2O + a microtubule = n ADP + n phosphate + (n+1) alpha/beta tubulin heterodimers.. ATPase activity is stimulated by microtubules, which promote homooligomerization. ATP-dependent microtubule severing is stimulated by interaction with KATNB1. Functionally, catalytic subunit of a complex which severs microtubules in an ATP-dependent manner. Microtubule severing may promote rapid reorganization of cellular microtubule arrays and the release of microtubules from the centrosome following nucleation. In mitotic spindles this could allow depolymerization of the microtubule end proximal to the centrosome, and subsequent poleward microtubule flux. In Strongylocentrotus purpuratus (Purple sea urchin), this protein is Katanin p60 ATPase-containing subunit A1.